The sequence spans 545 residues: Heparanase (545 aa).

An N-terminal signal peptide occupies residues 1–37; the sequence is MLACRKPGLRPPLLLLLPLLGPLGPCSPGTPAAAAPA. Residue 64 to 66 coordinates heparan sulfate group; it reads DAN. Residues 112 to 159 constitute a propeptide, linker peptide; that stretch reads PAFEERSYWLSQSNQDICKSGSIPSDVEEKLRLEWPFQEQVLLREQYQ. Cysteines 129 and 181 form a disulfide. 160-164 provides a ligand contact to heparan sulfate group; sequence KKFTN. Residues Asn164 and Asn219 are each glycosylated (N-linked (GlcNAc...) asparagine). Glu227 serves as the catalytic Proton donor. Heparan sulfate group contacts are provided by residues 272–282, His298, and Arg305; that span reads QPRRNTVKMLK. The interval 290–419 is required for heterodimerization with the heparanase 8 kDa subunit; it reads EVIDSVTWHH…LLFKKLVGNK (130 aa). Glu345 acts as the Nucleophile in catalysis. Heparan sulfate group contacts are provided by residues 350-352 and 391-393; these read FGG and GNY. A disulfide bond links Cys439 and Cys544. An N-linked (GlcNAc...) asparagine glycan is attached at Asn461. Residues 529–545 are required for transferring proheparanase to the Golgi apparatus, secretion and subsequent enzyme activity and for enhancement of PKB/AKT1 phosphorylation; the sequence is FSYGFFVIRNAKVAACI.

This sequence belongs to the glycosyl hydrolase 79 family. As to quaternary structure, heterodimer; heterodimer formation between the 8 kDa and the 50 kDa subunits is required for enzyme activity. Interacts with TF; the interaction, inhibited by heparin, enhances the generation of activated factor X and activates coagulation. Interacts with HRG; the interaction is enhanced at acidic pH, partially inhibits binding of HPSE to cell surface receptors and modulates its enzymatic activity. Interacts with SDC1; the interaction enhances the shedding of SDC1. Interacts with HPSE2. Post-translationally, proteolytically processed. The cleavage of the 65 kDa form leads to the generation of a linker peptide, and the 8 kDa and the 50 kDa products. The active form, the 8/50 kDa heterodimer, is resistant to degradation. Complete removal of the linker peptide appears to be a prerequisite to the complete activation of the enzyme. In terms of processing, N-glycosylated. Glycosylation of the 50 kDa subunit appears to be essential for its solubility. In terms of tissue distribution, highly expressed in placenta and weakly in the kidney, lung, spleen and uterus.

It is found in the lysosome membrane. It localises to the secreted. Its subcellular location is the nucleus. The enzyme catalyses endohydrolysis of (1-&gt;4)-beta-D-glycosidic bonds of heparan sulfate chains in heparan sulfate proteoglycan.. Its activity is regulated as follows. Inhibited by laminarin sulfate and, to a lower extent, by heparin, sulfamin and EDTA. Activated by calcium and magnesium. Functionally, endoglycosidase that cleaves heparan sulfate proteoglycans (HSPGs) into heparan sulfate side chains and core proteoglycans. Participates in extracellular matrix (ECM) degradation and remodeling. Selectively cleaves the linkage between a glucuronic acid unit and an N-sulfo glucosamine unit carrying either a 3-O-sulfo or a 6-O-sulfo group. Can also cleave the linkage between a glucuronic acid unit and an N-sulfo glucosamine unit carrying a 2-O-sulfo group, but not linkages between a glucuronic acid unit and a 2-O-sulfated iduronic acid moiety. Essentially inactive at neutral pH but becomes active under acidic conditions such as during tumor invasion and in inflammatory processes. Facilitates cell migration associated with metastasis, wound healing and inflammation. Enhances shedding of syndecans. Acts as a procoagulant by enhancing the generation of activated factor X/F10 in the presence of tissue factor/TF and activated factor VII/F7. Independent of its enzymatic activity, increases cell adhesion to the extracellular matrix (ECM). Enhances AKT1/PKB phosphorylation, possibly via interaction with a lipid raft-resident receptor. Plays a role in the regulation of osteogenesis. Enhances angiogenesis through up-regulation of SRC-mediated activation of VEGF. Implicated in hair follicle inner root sheath differentiation and hair homeostasis. In Bos taurus (Bovine), this protein is Heparanase (HPSE).